The following is a 331-amino-acid chain: DNA-directed RNA polymerase subunit alpha (331 aa).

Positions 1 to 242 are alpha N-terminal domain (alpha-NTD); it reads MEKFLRYNIQ…EHYKPIVTEL (242 aa). Residues 258-331 are alpha C-terminal domain (alpha-CTD); that stretch reads VSSSKSSLAI…RNLKLKEEQN (74 aa).

This sequence belongs to the RNA polymerase alpha chain family. Homodimer. The RNAP catalytic core consists of 2 alpha, 1 beta, 1 beta' and 1 omega subunit. When a sigma factor is associated with the core the holoenzyme is formed, which can initiate transcription.

The enzyme catalyses RNA(n) + a ribonucleoside 5'-triphosphate = RNA(n+1) + diphosphate. Functionally, DNA-dependent RNA polymerase catalyzes the transcription of DNA into RNA using the four ribonucleoside triphosphates as substrates. The sequence is that of DNA-directed RNA polymerase subunit alpha from Malacoplasma penetrans (strain HF-2) (Mycoplasma penetrans).